The following is a 136-amino-acid chain: Large ribosomal subunit protein bL20c (136 aa).

The protein belongs to the bacterial ribosomal protein bL20 family.

It localises to the plastid. The protein localises to the chloroplast. Functionally, binds directly to 23S ribosomal RNA and is necessary for the in vitro assembly process of the 50S ribosomal subunit. It is not involved in the protein synthesizing functions of that subunit. The chain is Large ribosomal subunit protein bL20c from Huperzia lucidula (Shining clubmoss).